The following is a 384-amino-acid chain: Cytochrome b (384 aa).

4 helical membrane-spanning segments follow: residues 33 to 53 (YGSLLFLCLIIQIATGLFLAM), 77 to 98 (WLIRNMHANGASFFFICLYLHI), 113 to 133 (WNVGVILFLLVMMTAFVGYVL), and 178 to 198 (FFAFHFLFPFVIAAAAVIHLL). Residues His-83 and His-97 each coordinate heme b. His-182 and His-196 together coordinate heme b. His-201 is an a ubiquinone binding site. A run of 4 helical transmembrane segments spans residues 226–246 (YKDLLGFALMLLALTSLALFT), 288–308 (LGGVLALLFSILVLMVVPILH), 320–340 (LSQMLFWTLVADVLILTWIGG), and 347–367 (FIIIGQVASVLYFMLFLVLMP).

Belongs to the cytochrome b family. In terms of assembly, the cytochrome bc1 complex contains 3 respiratory subunits (MT-CYB, CYC1 and UQCRFS1), 2 core proteins (UQCRC1 and UQCRC2) and probably 6 low-molecular weight proteins. Requires heme b as cofactor.

Its subcellular location is the mitochondrion inner membrane. Functionally, component of the ubiquinol-cytochrome c reductase complex (complex III or cytochrome b-c1 complex) that is part of the mitochondrial respiratory chain. The b-c1 complex mediates electron transfer from ubiquinol to cytochrome c. Contributes to the generation of a proton gradient across the mitochondrial membrane that is then used for ATP synthesis. This is Cytochrome b (mt-cyb) from Anoplogaster cornuta (Common fangtooth).